The chain runs to 355 residues: Heat-inducible transcription repressor HrcA (355 aa).

This sequence belongs to the HrcA family.

Negative regulator of class I heat shock genes (grpE-dnaK-dnaJ and groELS operons). Prevents heat-shock induction of these operons. The sequence is that of Heat-inducible transcription repressor HrcA from Nitratidesulfovibrio vulgaris (strain DSM 19637 / Miyazaki F) (Desulfovibrio vulgaris).